The primary structure comprises 170 residues: Probable deoxyuridine 5'-triphosphate nucleotidohydrolase (170 aa).

Belongs to the dCTP deaminase family. Archaeal dUTPase subfamily.

It catalyses the reaction dUTP + H2O = dUMP + diphosphate + H(+). It functions in the pathway pyrimidine metabolism; dUMP biosynthesis; dUMP from dCTP (dUTP route): step 2/2. Its function is as follows. This enzyme is involved in nucleotide metabolism: it produces dUMP, the immediate precursor of thymidine nucleotides and it decreases the intracellular concentration of dUTP so that uracil cannot be incorporated into DNA. In Methanococcoides burtonii (strain DSM 6242 / NBRC 107633 / OCM 468 / ACE-M), this protein is Probable deoxyuridine 5'-triphosphate nucleotidohydrolase.